A 123-amino-acid polypeptide reads, in one-letter code: U11/U12 small nuclear ribonucleoprotein 25 kDa protein (123 aa).

The Ubiquitin-like domain occupies 32 to 123; that stretch reads MTVRVCKMDG…VSFIKKLRQK (92 aa).

Component of the U11/U12 snRNPs that are part of the U12-type spliceosome.

It localises to the nucleus. The protein is U11/U12 small nuclear ribonucleoprotein 25 kDa protein (Snrnp25) of Mus musculus (Mouse).